The chain runs to 422 residues: SH2 domain-containing protein 4A (422 aa).

Phosphoserine occurs at positions 117 and 123. Disordered regions lie at residues 141–190 and 202–282; these read PQNV…EDEK and SEWQ…VIRT. 2 stretches are compositionally biased toward basic and acidic residues: residues 163-190 and 212-231; these read TKKD…EDEK and KAAD…DYKR. At Ser233 the chain carries Phosphoserine. The region spanning 316–408 is the SH2 domain; sequence WFHGILTLKK…LGKELLLFPC (93 aa).

In terms of assembly, interacts with ESR1.

It is found in the cytoplasm. Functionally, inhibits estrogen-induced cell proliferation by competing with PLCG for binding to ESR1, blocking the effect of estrogen on PLCG and repressing estrogen-induced proliferation. May play a role in T-cell development and function. In Rattus norvegicus (Rat), this protein is SH2 domain-containing protein 4A (Sh2d4a).